A 529-amino-acid chain; its full sequence is Peptide chain release factor 3 (529 aa).

The tr-type G domain occupies 11–280; that stretch reads AKRRTFAIIS…GLVEWAPAPM (270 aa). Residues 20 to 27, 88 to 92, and 142 to 145 each bind GTP; these read SHPDAGKT, DTPGH, and NKLD.

The protein belongs to the TRAFAC class translation factor GTPase superfamily. Classic translation factor GTPase family. PrfC subfamily.

Its subcellular location is the cytoplasm. Functionally, increases the formation of ribosomal termination complexes and stimulates activities of RF-1 and RF-2. It binds guanine nucleotides and has strong preference for UGA stop codons. It may interact directly with the ribosome. The stimulation of RF-1 and RF-2 is significantly reduced by GTP and GDP, but not by GMP. This is Peptide chain release factor 3 from Salmonella arizonae (strain ATCC BAA-731 / CDC346-86 / RSK2980).